Consider the following 30-residue polypeptide: Arsenate respiratory reductase iron-sulfur subunit ArrB (30 aa).

4 residues coordinate [4Fe-4S] cluster: C12, C15, C18, and C22.

In terms of assembly, heterodimer composed of one large subunit (ArrA) and one small subunit (ArrB). It depends on [4Fe-4S] cluster as a cofactor.

It is found in the periplasm. Its function is as follows. Component of the arsenate respiratory reductase (Arr) complex, which catalyzes the reduction of arsenate (As(V)) to arsenite (As(III)). ArrB is probably the electron transfer subunit. The polypeptide is Arsenate respiratory reductase iron-sulfur subunit ArrB (Chrysiogenes arsenatis).